The sequence spans 130 residues: Small ribosomal subunit protein uS9 (130 aa).

Belongs to the universal ribosomal protein uS9 family.

The polypeptide is Small ribosomal subunit protein uS9 (Salmonella paratyphi C (strain RKS4594)).